Reading from the N-terminus, the 359-residue chain is Membrane-bound lytic murein transglycosylase C (359 aa).

Residues 1-16 (MKKYLALALIAPLLIS) form the signal peptide. Residue Cys-17 is the site of N-palmitoyl cysteine attachment. The S-diacylglycerol cysteine moiety is linked to residue Cys-17.

The protein belongs to the transglycosylase Slt family.

It localises to the cell outer membrane. The catalysed reaction is Exolytic cleavage of the (1-&gt;4)-beta-glycosidic linkage between N-acetylmuramic acid (MurNAc) and N-acetylglucosamine (GlcNAc) residues in peptidoglycan, from either the reducing or the non-reducing ends of the peptidoglycan chains, with concomitant formation of a 1,6-anhydrobond in the MurNAc residue.. In terms of biological role, murein-degrading enzyme. May play a role in recycling of muropeptides during cell elongation and/or cell division. The sequence is that of Membrane-bound lytic murein transglycosylase C from Shigella flexneri serotype 5b (strain 8401).